Here is a 200-residue protein sequence, read N- to C-terminus: Recombination protein RecR (200 aa).

The C4-type zinc finger occupies 60 to 75 (CVYCQALTEDDVCNIC). The region spanning 83–177 (TKLCIIESML…KISRIGFGVP (95 aa)) is the Toprim domain.

This sequence belongs to the RecR family.

Its function is as follows. May play a role in DNA repair. It seems to be involved in an RecBC-independent recombinational process of DNA repair. It may act with RecF and RecO. This chain is Recombination protein RecR, found in Francisella tularensis subsp. tularensis (strain WY96-3418).